Consider the following 300-residue polypeptide: Acetylglutamate kinase (300 aa).

Residues 68 to 69, R90, and N194 contribute to the substrate site; that span reads GG.

It belongs to the acetylglutamate kinase family. ArgB subfamily.

The protein resides in the cytoplasm. The catalysed reaction is N-acetyl-L-glutamate + ATP = N-acetyl-L-glutamyl 5-phosphate + ADP. It participates in amino-acid biosynthesis; L-arginine biosynthesis; N(2)-acetyl-L-ornithine from L-glutamate: step 2/4. In terms of biological role, catalyzes the ATP-dependent phosphorylation of N-acetyl-L-glutamate. This Methanocaldococcus jannaschii (strain ATCC 43067 / DSM 2661 / JAL-1 / JCM 10045 / NBRC 100440) (Methanococcus jannaschii) protein is Acetylglutamate kinase.